A 282-amino-acid chain; its full sequence is Transcription factor MYB1 (282 aa).

HTH myb-type domains lie at 9 to 61 (KEGL…LNYL) and 62 to 116 (RPDI…SKKV). 2 DNA-binding regions (H-T-H motif) span residues 37-61 (WRDLPRRAGLKRCGKSCRLRWLNYL) and 89-112 (WSLIAGRLPGRTDNEIKNYWNTYL). Residues 258-282 (EDDWKQNGGKDELMGGGNGGPSSVS) are disordered. Residues 260-270 (DWKQNGGKDEL) are compositionally biased toward basic and acidic residues. The segment covering 271-282 (MGGGNGGPSSVS) has biased composition (gly residues).

It localises to the nucleus. Functionally, transcription activator involved in the spatiotemporal regulation of flavonoid biosynthesis specifically in the corms of Montbretia. Activates the promoters of enzymes involved in the biosynthesis of the flavonol kaempferol and the flavonol-glycoside kaempferol-rhamnoside. This chain is Transcription factor MYB1, found in Crocosmia x crocosmiiflora (Montbretia).